We begin with the raw amino-acid sequence, 1423 residues long: Guanine nucleotide exchange factor subunit RIC1 (1423 aa).

2 WD repeats span residues 64-103 and 304-343; these read TQFG…GDKY and NKTG…LICT. Residues 437 to 448 show a composition bias toward polar residues; the sequence is ASQTQNPRSSST. The tract at residues 437 to 463 is disordered; the sequence is ASQTQNPRSSSTHSEHKPSREKSPFAD. Basic and acidic residues predominate over residues 449–460; that stretch reads HSEHKPSREKSP. Phosphothreonine occurs at positions 992 and 996. Residues S1015, S1017, S1019, S1037, and S1172 each carry the phosphoserine modification. The disordered stretch occupies residues 1355-1423; that stretch reads PDAFQPITMG…QDGTYDCSVS (69 aa). Residues 1379–1397 show a composition bias toward polar residues; sequence GSSSHGSIPQGEVGSSNMV. Positions 1404–1413 are enriched in acidic residues; it reads TAQAEEEEPF.

This sequence belongs to the RIC1 family. Forms a complex with RGP1; the interaction enhances RAB6A GTPase activity. Interacts (via central domain) with RGP1. Interacts with RAB6A; the interaction is direct with a preference for RAB6A-GDP. Interacts (via C-terminus domain) with RAB33B; the interaction is direct with a preference for RAB33B-GTP. Interacts with GJA1. In terms of tissue distribution, present in kidney and various cell lines (at protein level). Widely expressed at low level.

Its subcellular location is the cytoplasm. The protein localises to the cytosol. The protein resides in the membrane. Its function is as follows. The RIC1-RGP1 complex acts as a guanine nucleotide exchange factor (GEF), which activates RAB6A by exchanging bound GDP for free GTP, and may thereby be required for efficient fusion of endosome-derived vesicles with the Golgi compartment. The RIC1-RGP1 complex participates in the recycling of mannose-6-phosphate receptors. Required for phosphorylation and localization of GJA1. Is a regulator of procollagen transport and secretion, and is required for correct cartilage morphogenesis and development of the craniofacial skeleton. This is Guanine nucleotide exchange factor subunit RIC1 from Homo sapiens (Human).